We begin with the raw amino-acid sequence, 477 residues long: Bifunctional protein HldE (477 aa).

The ribokinase stretch occupies residues 1–318 (MKVTLPEFER…ENAVRGRADT (318 aa)). An N6-acetyllysine modification is found at Lys179. ATP is bound at residue 195–198 (NLSE). Residue Asp264 is part of the active site. The segment at 344-477 (MTNGVFDILH…IKKIQQDKKG (134 aa)) is cytidylyltransferase.

The protein in the N-terminal section; belongs to the carbohydrate kinase PfkB family. It in the C-terminal section; belongs to the cytidylyltransferase family. In terms of assembly, homodimer.

It carries out the reaction D-glycero-beta-D-manno-heptose 7-phosphate + ATP = D-glycero-beta-D-manno-heptose 1,7-bisphosphate + ADP + H(+). The enzyme catalyses D-glycero-beta-D-manno-heptose 1-phosphate + ATP + H(+) = ADP-D-glycero-beta-D-manno-heptose + diphosphate. It participates in nucleotide-sugar biosynthesis; ADP-L-glycero-beta-D-manno-heptose biosynthesis; ADP-L-glycero-beta-D-manno-heptose from D-glycero-beta-D-manno-heptose 7-phosphate: step 1/4. The protein operates within nucleotide-sugar biosynthesis; ADP-L-glycero-beta-D-manno-heptose biosynthesis; ADP-L-glycero-beta-D-manno-heptose from D-glycero-beta-D-manno-heptose 7-phosphate: step 3/4. Its function is as follows. Catalyzes the phosphorylation of D-glycero-D-manno-heptose 7-phosphate at the C-1 position to selectively form D-glycero-beta-D-manno-heptose-1,7-bisphosphate. In terms of biological role, catalyzes the ADP transfer from ATP to D-glycero-beta-D-manno-heptose 1-phosphate, yielding ADP-D-glycero-beta-D-manno-heptose. The protein is Bifunctional protein HldE of Escherichia fergusonii (strain ATCC 35469 / DSM 13698 / CCUG 18766 / IAM 14443 / JCM 21226 / LMG 7866 / NBRC 102419 / NCTC 12128 / CDC 0568-73).